The sequence spans 184 residues: Photosystem I assembly protein Ycf4 (184 aa).

The next 2 membrane-spanning stretches (helical) occupy residues 22-42 (FFWAFILFLGSLGFLLVGTSS) and 57-77 (IIFFPQGIVMSFYGIAGLFIS).

Belongs to the Ycf4 family.

Its subcellular location is the plastid. The protein localises to the chloroplast thylakoid membrane. Its function is as follows. Seems to be required for the assembly of the photosystem I complex. This Aethionema cordifolium (Lebanon stonecress) protein is Photosystem I assembly protein Ycf4.